Consider the following 202-residue polypeptide: Thymidylate kinase (202 aa).

7–14 (GIDGSGKT) serves as a coordination point for ATP.

The protein belongs to the thymidylate kinase family.

The catalysed reaction is dTMP + ATP = dTDP + ADP. In terms of biological role, phosphorylation of dTMP to form dTDP in both de novo and salvage pathways of dTTP synthesis. The sequence is that of Thymidylate kinase from Ehrlichia chaffeensis (strain ATCC CRL-10679 / Arkansas).